The chain runs to 457 residues: MKIHFVGIGGIGMSALALHEFFSGNEVYGSNIEETERTTYLKKLKIPVFIPHSEENWFDPDVLVKTPAVHEDNPEIIRARKENVPVENRLSYFKVILKRENREEFAVTGTDGKTTTTAMIAHVLKELNRSPTAFLGGIMDSLEHGNYESGKGPVVYELDESEETFSEFSPNYLIITNARGDHLENYANSISRYRAAFERISRNSDLVITFAEDELTSHLGNVTFGVRKGMYTLEMRSASRSGQRAIIEKNRKRYAELKLRIPGFHNILNALAVTALFDSLGYDLEEVLKALERFPGVRRRFSISYHDPENNIYVVDDYAHTPEEIKNLLQTAKEVFENEKVVVIFQPHRYSRLEREDGNFARALQLADEVIVTEVYDAFEEKRPNVSGKIIWDSLMNLGKEAKFVDDLSRLNSVIVPRDNTVFLFVGAGDIIHYSKKFVETLQSSTNSPSRVSGSKR.

109–115 (GTDGKTT) is an ATP binding site.

The protein belongs to the MurCDEF family.

It is found in the cytoplasm. The catalysed reaction is UDP-N-acetyl-alpha-D-muramate + L-alanine + ATP = UDP-N-acetyl-alpha-D-muramoyl-L-alanine + ADP + phosphate + H(+). The protein operates within cell wall biogenesis; peptidoglycan biosynthesis. Cell wall formation. The chain is UDP-N-acetylmuramate--L-alanine ligase from Thermotoga neapolitana (strain ATCC 49049 / DSM 4359 / NBRC 107923 / NS-E).